Consider the following 461-residue polypeptide: Photosystem II CP43 reaction center protein (461 aa).

The propeptide occupies 1–2 (ME). Thr-3 is modified (N-acetylthreonine). Thr-3 is modified (phosphothreonine). Helical transmembrane passes span 57 to 81 (LFEV…PHLA), 122 to 143 (LLGP…KDRN), 166 to 188 (KALY…RKIT), 243 to 263 (KPFA…LSYS), and 279 to 300 (WFNN…ASQA). A [CaMn4O5] cluster-binding site is contributed by Glu-355. The chain crosses the membrane as a helical span at residues 435–459 (RARAAAAGFEKGIDRDLEPVLFMTP).

It belongs to the PsbB/PsbC family. PsbC subfamily. PSII is composed of 1 copy each of membrane proteins PsbA, PsbB, PsbC, PsbD, PsbE, PsbF, PsbH, PsbI, PsbJ, PsbK, PsbL, PsbM, PsbT, PsbX, PsbY, PsbZ, Psb30/Ycf12, at least 3 peripheral proteins of the oxygen-evolving complex and a large number of cofactors. It forms dimeric complexes. Binds multiple chlorophylls and provides some of the ligands for the Ca-4Mn-5O cluster of the oxygen-evolving complex. It may also provide a ligand for a Cl- that is required for oxygen evolution. PSII binds additional chlorophylls, carotenoids and specific lipids. serves as cofactor.

The protein localises to the plastid. It is found in the chloroplast thylakoid membrane. In terms of biological role, one of the components of the core complex of photosystem II (PSII). It binds chlorophyll and helps catalyze the primary light-induced photochemical processes of PSII. PSII is a light-driven water:plastoquinone oxidoreductase, using light energy to abstract electrons from H(2)O, generating O(2) and a proton gradient subsequently used for ATP formation. The chain is Photosystem II CP43 reaction center protein from Nandina domestica (Heavenly bamboo).